Reading from the N-terminus, the 1717-residue chain is DNA-directed RNA polymerase I subunit RPA1 (1717 aa).

Zn(2+) is bound by residues cysteine 64, cysteine 67, cysteine 74, histidine 77, cysteine 104, and cysteine 107. The interval 110–201 is clamp; sequence LTCPRAAIYL…VAQFWKTHMA (92 aa). Positions 205 and 208 each coordinate Zn(2+). Residues 327–433 are clamp; sequence FTNGQTVNLQ…IRQILEKKEG (107 aa). A rudder region spans residues 410-423; that stretch reads DSEMDKLMLEKYPG. DNA is bound by residues lysine 431, arginine 436, and arginine 443. The involved in RRN3 binding to Pol I complex stretch occupies residues 475-549; that stretch reads YPQPVTPWNV…QGTKVVCRHV (75 aa). Arginine 559 lines the RNA pocket. Residues aspartate 595, aspartate 597, and aspartate 599 each coordinate Mg(2+). Aspartate 599 is an RNA binding site. Residues 812–890 are funnel; it reads KPNADVVRQR…NEINKACMPL (79 aa). The interval 967 to 1008 is bridging helix; it reads RPPEFFFHCMAGREGLVDTAVKTSRSGYLQRCIIKHLEGLVI. The segment at 1067–1162 is mediates the interaction with TOP2A; the sequence is ADPQKVLGHI…SLSVWRPDIY (96 aa). Positions 1214-1255 are trigger loop; that stretch reads PGEAVGLLAAQSIGEPSTQMTLNTFHFAGRGEMNVTLGIPRL. Arginine 1256 is a DNA binding site. The segment at 1372–1493 is disordered; that stretch reads RNVNSRRATQ…RRHSRPQGAE (122 aa). Positions 1380-1397 are enriched in basic and acidic residues; that stretch reads TQKDLNDTEDSGRSQREE. At serine 1393 the chain carries Phosphoserine. Composition is skewed to acidic residues over residues 1398–1419 and 1429–1450; these read ERDE…DADA and EEEV…EVQE. Residues 1452–1464 are compositionally biased toward basic and acidic residues; it reads GNIKGDGVHQGHE. Residues 1465-1477 show a composition bias toward acidic residues; sequence PDEEEHLGLEEEE.

The protein belongs to the RNA polymerase beta' chain family. Component of the RNA polymerase I (Pol I) complex consisting of 13 subunits: a ten-subunit catalytic core composed of POLR1A/RPA1, POLR1B/RPA2, POLR1C/RPAC1, POLR1D/RPAC2, POLR1H/RPA12, POLR2E/RPABC1, POLR2F/RPABC2, POLR2H/RPABC3, POLR2K/RPABC4 and POLR2L/RPABC5; a mobile stalk subunit POLR1F/RPA43 protruding from the core and additional subunits homologous to general transcription factors POLR1E/RPA49 and POLR1G/RPA34. Part of Pol I pre-initiation complex (PIC), in which Pol I core assembles with RRN3 and promoter-bound UTBF and SL1/TIF-IB complex. Interacts (via dock II domain) with TOP2A; this interaction may assist Pol I transcription initiation by releasing supercoils occurring during DNA unwinding. Interacts with CAVIN1; this interaction induces the dissociation of Pol I complex paused at rDNA terminator sequences. Interacts with MYO1C. Interacts with ERBB2. Interacts with DDX11. Interacts with RECQL5. Requires Mg(2+) as cofactor. In terms of processing, phosphorylated.

The protein localises to the nucleus. It localises to the nucleolus. Its subcellular location is the chromosome. It catalyses the reaction RNA(n) + a ribonucleoside 5'-triphosphate = RNA(n+1) + diphosphate. In terms of biological role, catalytic core component of RNA polymerase I (Pol I), a DNA-dependent RNA polymerase which synthesizes ribosomal RNA precursors using the four ribonucleoside triphosphates as substrates. Transcribes 47S pre-rRNAs from multicopy rRNA gene clusters, giving rise to 5.8S, 18S and 28S ribosomal RNAs. Pol I-mediated transcription cycle proceeds through transcription initiation, transcription elongation and transcription termination stages. During transcription initiation, Pol I pre-initiation complex (PIC) is recruited by the selectivity factor 1 (SL1/TIF-IB) complex bound to the core promoter that precedes an rDNA repeat unit. The PIC assembly bends the promoter favoring the formation of the transcription bubble and promoter escape. Once the polymerase has escaped from the promoter it enters the elongation phase during which RNA is actively polymerized, based on complementarity with the template DNA strand. Highly processive, assembles in structures referred to as 'Miller trees' where many elongating Pol I complexes queue and transcribe the same rDNA coding regions. At terminator sequences downstream of the rDNA gene, PTRF interacts with Pol I and halts Pol I transcription leading to the release of the RNA transcript and polymerase from the DNA. Forms Pol I active center together with the second largest subunit POLR1B/RPA2. Appends one nucleotide at a time to the 3' end of the nascent RNA, with POLR1A/RPA1 contributing a Mg(2+)-coordinating DxDGD motif, and POLR1B/RPA2 participating in the coordination of a second Mg(2+) ion and providing lysine residues believed to facilitate Watson-Crick base pairing between the incoming nucleotide and the template base. Typically, Mg(2+) ions direct a 5' nucleoside triphosphate to form a phosphodiester bond with the 3' hydroxyl of the preceding nucleotide of the nascent RNA, with the elimination of pyrophosphate. Has proofreading activity: Pauses and backtracks to allow the cleavage of a missincorporated nucleotide via POLR1H/RPA12. High Pol I processivity is associated with decreased transcription fidelity. This chain is DNA-directed RNA polymerase I subunit RPA1, found in Mus musculus (Mouse).